A 311-amino-acid chain; its full sequence is Pyrimidine-specific ribonucleoside hydrolase RihA (311 aa).

The active site involves His240.

The protein belongs to the IUNH family. RihA subfamily.

In terms of biological role, hydrolyzes cytidine or uridine to ribose and cytosine or uracil, respectively. This is Pyrimidine-specific ribonucleoside hydrolase RihA from Klebsiella pneumoniae (strain 342).